Reading from the N-terminus, the 281-residue chain is Putative zinc-binding protein ORF11 (281 aa).

This is Putative zinc-binding protein ORF11 (ORF11) from Ictaluridae (bullhead catfishes).